The following is a 312-amino-acid chain: tRNA uridine(34) hydroxylase (312 aa).

The region spanning 145-235 (ENKNSVLVDM…GIIKYVRDAR (91 aa)) is the Rhodanese domain. Cys199 acts as the Cysteine persulfide intermediate in catalysis.

It belongs to the TrhO family.

The catalysed reaction is uridine(34) in tRNA + AH2 + O2 = 5-hydroxyuridine(34) in tRNA + A + H2O. Its function is as follows. Catalyzes oxygen-dependent 5-hydroxyuridine (ho5U) modification at position 34 in tRNAs. The sequence is that of tRNA uridine(34) hydroxylase from Buchnera aphidicola subsp. Baizongia pistaciae (strain Bp).